Consider the following 540-residue polypeptide: Transcription termination/antitermination protein NusA (540 aa).

Residues 144-214 enclose the S1 motif domain; sequence GQVIEARVED…SMWPITLSRS (71 aa). The 68-residue stretch at 319 to 386 folds into the KH domain; the sequence is DTSIEIVVPA…QGIFGIKKRR (68 aa). The segment at 457 to 540 is disordered; it reads VAAPTPTPAP…KQTFDNFDDL (84 aa). Residues 461–489 are compositionally biased toward pro residues; that stretch reads TPTPAPQPTPAPTKVEPVPPPVSVTPKPI. Positions 512-522 are enriched in basic and acidic residues; the sequence is DDSKTKPEKSS. The segment covering 523–540 has biased composition (polar residues); that stretch reads AKTNTPQTKQTFDNFDDL.

This sequence belongs to the NusA family. As to quaternary structure, monomer. Binds directly to the core enzyme of the DNA-dependent RNA polymerase and to nascent RNA.

It localises to the cytoplasm. In terms of biological role, participates in both transcription termination and antitermination. The chain is Transcription termination/antitermination protein NusA from Mycoplasma pneumoniae (strain ATCC 29342 / M129 / Subtype 1) (Mycoplasmoides pneumoniae).